Reading from the N-terminus, the 862-residue chain is DNA mismatch repair protein MutS (862 aa).

An ATP-binding site is contributed by 604–611 (GPNMAGKS).

The protein belongs to the DNA mismatch repair MutS family.

Functionally, this protein is involved in the repair of mismatches in DNA. It is possible that it carries out the mismatch recognition step. This protein has a weak ATPase activity. The protein is DNA mismatch repair protein MutS of Brevibacillus brevis (strain 47 / JCM 6285 / NBRC 100599).